A 264-amino-acid chain; its full sequence is 3-deoxy-manno-octulosonate cytidylyltransferase (264 aa).

It belongs to the KdsB family.

The protein resides in the cytoplasm. It carries out the reaction 3-deoxy-alpha-D-manno-oct-2-ulosonate + CTP = CMP-3-deoxy-beta-D-manno-octulosonate + diphosphate. It participates in nucleotide-sugar biosynthesis; CMP-3-deoxy-D-manno-octulosonate biosynthesis; CMP-3-deoxy-D-manno-octulosonate from 3-deoxy-D-manno-octulosonate and CTP: step 1/1. The protein operates within bacterial outer membrane biogenesis; lipopolysaccharide biosynthesis. Its function is as follows. Activates KDO (a required 8-carbon sugar) for incorporation into bacterial lipopolysaccharide in Gram-negative bacteria. This Marinomonas sp. (strain MWYL1) protein is 3-deoxy-manno-octulosonate cytidylyltransferase.